Consider the following 608-residue polypeptide: MPSNYTQHVGNHDFTRATVVIIGAGVSGMCMAIDLLHRTPIRKFVILEQGSSVGGTWANNLYPGCASDVCSSLYSYSFEQRPDWAAEYPGQEEFLTYMTDVAQKHGLYKYIRFNSTVQEARWDDKQQQWKVKVALNSAKASEFHEQYELTTNFLVSAVGQLNVPSYPSISGLDDYTGKLIHSARWDWTYDFSGKRIGVIGNGASAIQIVPELAKTASHITIYQRSPKWLLPRSNKKIGAIQHFLLSYVPPLRWCKRILQMRYREWLYNVLVTPGTVPARQFEAQSQEWMKSQLPDKPELWDTLTPNYAIGCKRVLISDDFYAALNASHVDLNTRPIQRITATGVQTDDDEQEYDLIVLATGFRASEFLHPIRVYGAGGRSLEDIWKDGPRAYYGMTVEDVPNFGMLYGPNTNLGHNSVITMIEAQSRYLSTMIRAVADAKKKDQTLVIQPRPEVLREYNERVQKHLAETSFADPNCQSWYKTDEGLITNNWPSTVVRYQKEVSQVRWADFILKGSGSAAVAKKKATYVGRVKEEALVSNVTLFLGVALAAGGVYWRATSWWKWEVPLIDKVGDDGILYGSGKTAWTSRVCPGAHCASGLLRILSLRRA.

Residue Asn-4 is glycosylated (N-linked (GlcNAc...) asparagine). The helical transmembrane segment at 17–37 (ATVVIIGAGVSGMCMAIDLLH) threads the bilayer. Residues 56–59 (TWAN), 68–69 (DV), and Tyr-74 each bind FAD. 66–68 (ASD) lines the NADP(+) pocket. Asn-114 is a glycosylation site (N-linked (GlcNAc...) asparagine). Residues 201 to 207 (NGASAIQ) and 224 to 225 (RS) each bind NADP(+). An N-linked (GlcNAc...) asparagine glycan is attached at Asn-325. A helical membrane pass occupies residues 535–555 (ALVSNVTLFLGVALAAGGVYW).

The protein belongs to the FAD-binding monooxygenase family. FAD serves as cofactor.

Its subcellular location is the membrane. Functionally, non-reducing polyketide synthase; part of the gene cluster that mediates the biosynthesis of the bicoumarin kotanin. The non-reducing polyketide synthase ktnS first catalyzes the formation of the pentaketidic 4,7-dihydroxy-5-methylcoumarin from acetyl coenzyme A and 4 malonyl coenzyme A molecules. Further O-methylation by ktnB leads to the formation of 7-demethylsiderin. Then, an oxidative phenol coupling catalyzed by the cytochrome P450 monooxygenase ktnC forms the 8,8'-dimer P-orlandin via dimerization the monomeric precursor, 7-demethylsiderin. P-orlandin is subsequently O-methylated in a stepwise fashion to demethylkotanin and kotanin. The function of ktnD within the pathway has not been determined yet. In Aspergillus niger (strain ATCC MYA-4892 / CBS 513.88 / FGSC A1513), this protein is FAD-binding monooxygenase ktnD.